We begin with the raw amino-acid sequence, 1154 residues long: PAN2-PAN3 deadenylation complex catalytic subunit pan2 (1154 aa).

WD repeat units follow at residues 20-59 (GLPT…RYTS), 102-145 (THDE…DKLR), and 276-315 (ATVS…HFNE). The tract at residues 316–451 (MSKEVEFADV…GARISGESED (136 aa)) is linker. The region spanning 452 to 821 (DPLLKYSNVE…SPCVLAFQVR (370 aa)) is the USP domain. The 179-residue stretch at 870-1048 (VALDTEFVDL…IEDARMALRL (179 aa)) folds into the Exonuclease domain. Positions 873, 875, 982, and 1041 each coordinate a divalent metal cation. The segment at 1092–1154 (PGTAVTMQNN…GEFFTGSPLK (63 aa)) is disordered. Composition is skewed to polar residues over residues 1096 to 1109 (VTMQ…TPST) and 1132 to 1141 (LTPSNGTFSG).

It belongs to the peptidase C19 family. PAN2 subfamily. As to quaternary structure, forms a heterotrimer with an asymmetric homodimer of the regulatory subunit pan3 to form the poly(A)-nuclease (PAN) deadenylation complex. The cofactor is a divalent metal cation.

It is found in the cytoplasm. The enzyme catalyses Exonucleolytic cleavage of poly(A) to 5'-AMP.. With respect to regulation, positively regulated by the regulatory subunit pan3. Catalytic subunit of the poly(A)-nuclease (PAN) deadenylation complex, one of two cytoplasmic mRNA deadenylases involved in mRNA turnover. PAN specifically shortens poly(A) tails of RNA and the activity is stimulated by poly(A)-binding protein pab1. PAN deadenylation is followed by rapid degradation of the shortened mRNA tails by the CCR4-NOT complex. Deadenylated mRNAs are then degraded by two alternative mechanisms, namely exosome-mediated 3'-5' exonucleolytic degradation, or deadenylation-dependent mRNA decaping and subsequent 5'-3' exonucleolytic degradation by xrn1. May also be involved in post-transcriptional maturation of mRNA poly(A) tails. This chain is PAN2-PAN3 deadenylation complex catalytic subunit pan2, found in Emericella nidulans (strain FGSC A4 / ATCC 38163 / CBS 112.46 / NRRL 194 / M139) (Aspergillus nidulans).